The primary structure comprises 213 residues: GTP cyclohydrolase 1 (213 aa).

Residues Cys104, His107, and Cys175 each coordinate Zn(2+).

It belongs to the GTP cyclohydrolase I family. As to quaternary structure, toroid-shaped homodecamer, composed of two pentamers of five dimers.

The catalysed reaction is GTP + H2O = 7,8-dihydroneopterin 3'-triphosphate + formate + H(+). Its pathway is cofactor biosynthesis; 7,8-dihydroneopterin triphosphate biosynthesis; 7,8-dihydroneopterin triphosphate from GTP: step 1/1. The chain is GTP cyclohydrolase 1 from Brucella abortus (strain 2308).